Consider the following 57-residue polypeptide: Large ribosomal subunit protein eL37 (57 aa).

Positions 20, 23, 35, and 38 each coordinate Zn(2+). Residues 20 to 38 (CRRCGEKSYHKQKKVCASC) form a C4-type zinc finger.

It belongs to the eukaryotic ribosomal protein eL37 family. Zn(2+) is required as a cofactor.

Functionally, binds to the 23S rRNA. The polypeptide is Large ribosomal subunit protein eL37 (Natronomonas pharaonis (strain ATCC 35678 / DSM 2160 / CIP 103997 / JCM 8858 / NBRC 14720 / NCIMB 2260 / Gabara) (Halobacterium pharaonis)).